A 650-amino-acid chain; its full sequence is Threonine--tRNA ligase (650 aa).

Residues 5–67 (NKSMFIKLKD…QEGDQVILWG (63 aa)) enclose the TGS domain. The segment at 246 to 537 (DHKLLGAKLD…LIEHYVGKFP (292 aa)) is catalytic. 3 residues coordinate Zn(2+): Cys-337, His-388, and His-514.

It belongs to the class-II aminoacyl-tRNA synthetase family. Homodimer. Zn(2+) serves as cofactor.

Its subcellular location is the cytoplasm. It catalyses the reaction tRNA(Thr) + L-threonine + ATP = L-threonyl-tRNA(Thr) + AMP + diphosphate + H(+). In terms of biological role, catalyzes the attachment of threonine to tRNA(Thr) in a two-step reaction: L-threonine is first activated by ATP to form Thr-AMP and then transferred to the acceptor end of tRNA(Thr). Also edits incorrectly charged L-seryl-tRNA(Thr). The protein is Threonine--tRNA ligase of Protochlamydia amoebophila (strain UWE25).